An 80-amino-acid chain; its full sequence is Serine rich endogenous peptide 18 (80 aa).

A signal peptide spans 1 to 25 (MYNVVVCLLTLSFLLLTGLSNTAEA). The SCOOP motif signature appears at 45–59 (KAEVGGSCSPHAHGR). The segment at 50-80 (GSCSPHAHGRGPPNRPGSSNIPGSPKRCTKP) is disordered. A SxS motif essential for MIK2 binding motif is present at residues 51–53 (SCS).

This sequence belongs to the serine rich endogenous peptide (SCOOP) phytocytokine family. Interacts with MIK2 (via extracellular leucine-rich repeat domain); this interaction triggers the formation of complex between MIK2 and the BAK1/SERK3 and SERK4 coreceptors, and subsequent BAK1 activation by phosphorylation.

Its subcellular location is the cell membrane. The protein resides in the secreted. It localises to the extracellular space. The protein localises to the apoplast. Functionally, brassicaceae-specific phytocytokine (plant endogenous peptide released into the apoplast) perceived by MIK2 in a BAK1/SERK3 and SERK4 coreceptors-dependent manner, that modulates various physiological and antimicrobial processes including growth prevention and reactive oxygen species (ROS) response regulation. This chain is Serine rich endogenous peptide 18, found in Arabidopsis thaliana (Mouse-ear cress).